The sequence spans 414 residues: Esterase FrsA (414 aa).

The protein belongs to the FrsA family.

It catalyses the reaction a carboxylic ester + H2O = an alcohol + a carboxylate + H(+). Its function is as follows. Catalyzes the hydrolysis of esters. This Escherichia coli (strain K12 / DH10B) protein is Esterase FrsA.